The sequence spans 260 residues: Flap endonuclease Xni (260 aa).

Asp112 lines the Mg(2+) pocket. The region spanning 168–258 (LQPSQLVDFW…FNLKDLRYTP (91 aa)) is the 5'-3' exonuclease domain. Positions 179, 190, and 193 each coordinate K(+). An interaction with DNA region spans residues 192-197 (GIGEKT).

Belongs to the Xni family. Mg(2+) serves as cofactor. The cofactor is K(+).

Functionally, has flap endonuclease activity. During DNA replication, flap endonucleases cleave the 5'-overhanging flap structure that is generated by displacement synthesis when DNA polymerase encounters the 5'-end of a downstream Okazaki fragment. The chain is Flap endonuclease Xni from Tolumonas auensis (strain DSM 9187 / NBRC 110442 / TA 4).